The sequence spans 172 residues: MRALIIGRWQPFHNGHLSIIKEISNEVDEIIIGIGSAQKSHSLDNPFTAGERIMMIIKSLKKYNFPYYVIPIKDIEFNAVWVSYVEALTPPFDIVYSGNALVKELFEEKGYEVRKPKLYNRTEYSGTEIRKRIINNEDWKHLIPNGVINVIDEIDGENRIKRLNMKDYDIIE.

It belongs to the archaeal NMN adenylyltransferase family.

It is found in the cytoplasm. The enzyme catalyses beta-nicotinamide D-ribonucleotide + ATP + H(+) = diphosphate + NAD(+). The protein operates within cofactor biosynthesis; NAD(+) biosynthesis; NAD(+) from nicotinamide D-ribonucleotide: step 1/1. The sequence is that of Nicotinamide-nucleotide adenylyltransferase from Methanococcus aeolicus (strain ATCC BAA-1280 / DSM 17508 / OCM 812 / Nankai-3).